Consider the following 1178-residue polypeptide: DNA-directed RNA polymerase subunit beta' (1178 aa).

4 residues coordinate Zn(2+): Cys-60, Cys-62, Cys-75, and Cys-78. Mg(2+) contacts are provided by Asp-450, Asp-452, and Asp-454. The Zn(2+) site is built by Cys-795, Cys-869, Cys-876, and Cys-879.

This sequence belongs to the RNA polymerase beta' chain family. The RNAP catalytic core consists of 2 alpha, 1 beta, 1 beta' and 1 omega subunit. When a sigma factor is associated with the core the holoenzyme is formed, which can initiate transcription. The cofactor is Mg(2+). Requires Zn(2+) as cofactor.

The enzyme catalyses RNA(n) + a ribonucleoside 5'-triphosphate = RNA(n+1) + diphosphate. In terms of biological role, DNA-dependent RNA polymerase catalyzes the transcription of DNA into RNA using the four ribonucleoside triphosphates as substrates. The sequence is that of DNA-directed RNA polymerase subunit beta' from Clostridium perfringens (strain ATCC 13124 / DSM 756 / JCM 1290 / NCIMB 6125 / NCTC 8237 / Type A).